A 567-amino-acid polypeptide reads, in one-letter code: Serine/threonine-protein kinase SSN3 (567 aa).

Residues 68–470 form the Protein kinase domain; that stretch reads YEIIGYIAAG…AINALDHSYF (403 aa). ATP is bound at residue 74 to 82; that stretch reads IAAGTYGKV. The disordered stretch occupies residues 88-179; it reads RQSSKSSSST…RNSENTDNRR (92 aa). The span at 90-101 shows a compositional bias: low complexity; the sequence is SSKSSSSTGSDS. Composition is skewed to polar residues over residues 102–122 and 133–150; these read LAQDTKPTTEFSNTSSLQNAG and PNSNNISAGGNTNPELST. Over residues 167-179 the composition is skewed to basic and acidic residues; that stretch reads GDKRNSENTDNRR. Lys-190 is a binding site for ATP. The Proton acceptor role is filled by Asp-293. Positions 546–556 are enriched in low complexity; sequence AVSGNSSSQSS. The tract at residues 546 to 567 is disordered; the sequence is AVSGNSSSQSSRNMEPMKKKRK.

Belongs to the protein kinase superfamily. CMGC Ser/Thr protein kinase family. CDC2/CDKX subfamily. Component of the SRB8-11 complex, a regulatory module of the Mediator complex. It depends on Mg(2+) as a cofactor.

It localises to the nucleus. It carries out the reaction L-seryl-[protein] + ATP = O-phospho-L-seryl-[protein] + ADP + H(+). The catalysed reaction is L-threonyl-[protein] + ATP = O-phospho-L-threonyl-[protein] + ADP + H(+). The enzyme catalyses [DNA-directed RNA polymerase] + ATP = phospho-[DNA-directed RNA polymerase] + ADP + H(+). Component of the SRB8-11 complex. The SRB8-11 complex is a regulatory module of the Mediator complex which is itself involved in regulation of basal and activated RNA polymerase II-dependent transcription. The SRB8-11 complex may be involved in the transcriptional repression of a subset of genes regulated by Mediator. It may inhibit the association of the Mediator complex with RNA polymerase II to form the holoenzyme complex. The SRB8-11 complex phosphorylates the C-terminal domain (CTD) of the largest subunit of RNA polymerase II. The sequence is that of Serine/threonine-protein kinase SSN3 (SSN3) from Candida glabrata (strain ATCC 2001 / BCRC 20586 / JCM 3761 / NBRC 0622 / NRRL Y-65 / CBS 138) (Yeast).